We begin with the raw amino-acid sequence, 142 residues long: Transcriptional regulator MraZ (142 aa).

2 SpoVT-AbrB domains span residues 5–51 and 77–120; these read ASAL…PRPE and AMDV…DSQT.

It belongs to the MraZ family. In terms of assembly, forms oligomers.

It is found in the cytoplasm. Its subcellular location is the nucleoid. In Burkholderia cenocepacia (strain HI2424), this protein is Transcriptional regulator MraZ.